We begin with the raw amino-acid sequence, 132 residues long: MSDIQTSTVSEDGFACTSQVGDFDLQIDATDETGPNPNAALVATYASCFLPAFRVGGQKTGFDDLGKVQIDADADLDDSDDLERISFDVYVESDLSDDEFAEITELAEDICHVHDALRDELQADVTVVGDAF.

Lysine 59 participates in a covalent cross-link: Glycyl lysine isopeptide (Lys-Gly) (interchain with G-Cter in SAMP2).

The protein belongs to the OsmC/Ohr family.

This is an uncharacterized protein from Haloferax volcanii (strain ATCC 29605 / DSM 3757 / JCM 8879 / NBRC 14742 / NCIMB 2012 / VKM B-1768 / DS2) (Halobacterium volcanii).